Consider the following 255-residue polypeptide: Zinc finger CCCH domain-containing protein 37 (255 aa).

C3H1-type zinc fingers lie at residues 98-128 (AYTG…HGTF) and 137-159 (YRTR…AHTA).

The chain is Zinc finger CCCH domain-containing protein 37 from Oryza sativa subsp. japonica (Rice).